We begin with the raw amino-acid sequence, 162 residues long: Large ribosomal subunit protein uL10 (162 aa).

Belongs to the universal ribosomal protein uL10 family. Part of the ribosomal stalk of the 50S ribosomal subunit. The N-terminus interacts with L11 and the large rRNA to form the base of the stalk. The C-terminus forms an elongated spine to which L12 dimers bind in a sequential fashion forming a multimeric L10(L12)X complex.

Functionally, forms part of the ribosomal stalk, playing a central role in the interaction of the ribosome with GTP-bound translation factors. This Aliarcobacter butzleri (strain RM4018) (Arcobacter butzleri) protein is Large ribosomal subunit protein uL10.